The primary structure comprises 1229 residues: MALPRPVQYGKVQRMSYGKVKEVLDLPYLLEIQKKSFQWFLDEGLREVLREISPIKDYTENLLLEFVDYYFDGPPKYSEQECKERDATYARPLKVKVRLINKETGEIKEQDIYMGEFPIMTETGTFIINGAERVIVSQLIRSPGCYFASSIDKQGRKIFSGTIIPNRGAWLEFETDTSELLSVRLDRTRKVSLTTLLKAFGLYNQQLIFNKLGEDERLKASLEKEANKGEIGNPVENALLEIYRRLRPGEPPNVENAKNLLERMYFDPRGYDLAKVGRYKLNKKLSLWKRIFNKRAAEDIVDKRTGEILVKEGEIISREAALNIQDAGINEVLVYVEDDKVFKVVGNNTVKLDRYVDFDVSDLNIKELVYLPVLNEILSTTNDVNEIKQLIKERERELVPYCLTRDDVFAATSYFLGLKYGIGHIDDIDHLGNRRVRAVGELLQNQFRIGLARMERVIRERMTIQDIDSVTPQTLINIRPVTAAIKEFFGSSPLSQFMDQVNPLAALTNKRRLSALGPGGLSRDRAGFEVRDVHHSHYGRMCPIETPEGPNIGLITSLATYARVNEYGFLETPYRKVDKKEARVTDEVVYLTADEEDTYKIAQATEPVDEEGRFINQRITVRFGEDIIEVDKHEVDLVDISPKQIVSVSTSLIPFLENDDANRALMGSNMQRQAVPLLTTESPIIGTGVEYRAAVDSGVCVLAKKDGIVEKVSADEIVIQNHDGTKDVYHLLKFKRTNQGTCFNQRPIVRKGQEVKTGEVIADGPSTDHGELALGKNVLVAFMPWEGYNYEDAILISERLVKEDVYTSIHIEEYECEARDTKLGPEEITRDIPNIGEDAIKDLDERGIIRIGAEVKSGDILVGKVTPKGETELTAEERLLRAIFGEKARETRDTSLRVPHGEGGIVVDVKVFSRDKGDELPPGVNQLVRVYVAQKRKISVGDKMAGRHGNKGVISRILPVEDMPFLPDGTPVDIVLNPLGVPSRMNIGQILETHLGYAAKALGWKVATPVFDGAKEEDIEEALNLAGLSPNGKTILYDGRTGEPFDNEVTVGYMYMLKLVHLVDDKIHARSTGPYSLVTQQPLGGKAQFGGQRFGEMEVWALEAYGAAYTLQELLTVKSDDVTGRVKTYEAIVKGENIPEPGIPESFKVLVKELQSLCLDVKLLSEDNKEIELKESIDEDEQPQGLGAFERGLEEVENGEEDDDKEKFYEDLMDASQEQDESADDDIDE.

The tract at residues 1175 to 1229 (ESIDEDEQPQGLGAFERGLEEVENGEEDDDKEKFYEDLMDASQEQDESADDDIDE) is disordered. 2 stretches are compositionally biased toward acidic residues: residues 1195–1204 (EVENGEEDDD) and 1211–1229 (DLMDASQEQDESADDDIDE).

It belongs to the RNA polymerase beta chain family. The RNAP catalytic core consists of 2 alpha, 1 beta, 1 beta' and 1 omega subunit. When a sigma factor is associated with the core the holoenzyme is formed, which can initiate transcription.

The catalysed reaction is RNA(n) + a ribonucleoside 5'-triphosphate = RNA(n+1) + diphosphate. In terms of biological role, DNA-dependent RNA polymerase catalyzes the transcription of DNA into RNA using the four ribonucleoside triphosphates as substrates. This Caldicellulosiruptor saccharolyticus (strain ATCC 43494 / DSM 8903 / Tp8T 6331) protein is DNA-directed RNA polymerase subunit beta.